Reading from the N-terminus, the 101-residue chain is Small ribosomal subunit protein uS14 (101 aa).

Belongs to the universal ribosomal protein uS14 family. In terms of assembly, part of the 30S ribosomal subunit. Contacts proteins S3 and S10.

Its function is as follows. Binds 16S rRNA, required for the assembly of 30S particles and may also be responsible for determining the conformation of the 16S rRNA at the A site. The polypeptide is Small ribosomal subunit protein uS14 (Tropheryma whipplei (strain TW08/27) (Whipple's bacillus)).